Here is a 553-residue protein sequence, read N- to C-terminus: Dihydroxy-acid dehydratase (553 aa).

Position 78 (Asp-78) interacts with Mg(2+). [2Fe-2S] cluster is bound at residue Cys-119. The Mg(2+) site is built by Asp-120 and Lys-121. Position 121 is an N6-carboxylysine (Lys-121). Cys-193 contributes to the [2Fe-2S] cluster binding site. Glu-441 contacts Mg(2+). The Proton acceptor role is filled by Ser-467.

It belongs to the IlvD/Edd family. Homodimer. It depends on [2Fe-2S] cluster as a cofactor. Mg(2+) serves as cofactor.

The enzyme catalyses (2R)-2,3-dihydroxy-3-methylbutanoate = 3-methyl-2-oxobutanoate + H2O. The catalysed reaction is (2R,3R)-2,3-dihydroxy-3-methylpentanoate = (S)-3-methyl-2-oxopentanoate + H2O. It participates in amino-acid biosynthesis; L-isoleucine biosynthesis; L-isoleucine from 2-oxobutanoate: step 3/4. Its pathway is amino-acid biosynthesis; L-valine biosynthesis; L-valine from pyruvate: step 3/4. In terms of biological role, functions in the biosynthesis of branched-chain amino acids. Catalyzes the dehydration of (2R,3R)-2,3-dihydroxy-3-methylpentanoate (2,3-dihydroxy-3-methylvalerate) into 2-oxo-3-methylpentanoate (2-oxo-3-methylvalerate) and of (2R)-2,3-dihydroxy-3-methylbutanoate (2,3-dihydroxyisovalerate) into 2-oxo-3-methylbutanoate (2-oxoisovalerate), the penultimate precursor to L-isoleucine and L-valine, respectively. The chain is Dihydroxy-acid dehydratase from Citrifermentans bemidjiense (strain ATCC BAA-1014 / DSM 16622 / JCM 12645 / Bem) (Geobacter bemidjiensis).